A 716-amino-acid chain; its full sequence is Fusoxypene synthase (716 aa).

A sesterterpenoid synthase region spans residues 4-328 (LSYQSRLIPP…WLSACSRQNT (325 aa)). Asp-96 contributes to the Mg(2+) binding site. Residue Asp-96 participates in substrate binding. Positions 187–190 (RMTN) are substrate. Asn-231 serves as a coordination point for substrate. Residues 235-239 (SYERE) form a substrate region. A geranylfarnesyl diphosphate synthase region spans residues 329–711 (WKTNCSIDGK…CLATLSMEGC (383 aa)). Residues Lys-422, Arg-425, and His-454 each coordinate isopentenyl diphosphate. Mg(2+) contacts are provided by Asp-461 and Asp-465. A dimethylallyl diphosphate-binding site is contributed by Arg-470. An isopentenyl diphosphate-binding site is contributed by Arg-471. The dimethylallyl diphosphate site is built by Lys-548, Thr-549, Gln-587, Asn-594, and Lys-602.

It in the N-terminal section; belongs to the terpene synthase family. The protein in the C-terminal section; belongs to the FPP/GGPP synthase family.

The enzyme catalyses 4 isopentenyl diphosphate + dimethylallyl diphosphate = (2E,6E,10E,14E)-geranylfarnesyl diphosphate + 4 diphosphate. It carries out the reaction (2E,6E,10E,14E)-geranylfarnesyl diphosphate = fusoxypene A + diphosphate. It catalyses the reaction (2E,6E,10E,14E)-geranylfarnesyl diphosphate = fusoxypene B + diphosphate. The catalysed reaction is (2E,6E,10E,14E)-geranylfarnesyl diphosphate = fusoxypene C + diphosphate. The enzyme catalyses (2E,6E,10E,14E)-geranylfarnesyl diphosphate = (-)-astellatene + diphosphate. Functionally, bifunctional sesterterpenoid synthase that performs both prenyl transferase and terpene cyclase activity, converting isopentenyl diphosphate and dimethylallyl diphosphate into geranylfarnesyl diphosphate (GFPP) and then converting GFPP into the enantiomeric sesterterpenes with a 5-6-7-3-5 ring system fusoxypene A, fusoxypene B, fusoxypene C and (-)-astellatene. This is Fusoxypene synthase from Fusarium oxysporum (Fusarium vascular wilt).